Reading from the N-terminus, the 230-residue chain is Peptidyl-prolyl cis-trans isomerase FKBP16-4, chloroplastic (230 aa).

A chloroplast-targeting transit peptide spans 1–56 (MILTMKLVHPLHHSLSSSIPFPSRKRQSKPYRCSLPSPGCEKVIRTETVLPPAPVS). Positions 123 to 217 (GSRVAVHYVA…ELDIELLSIK (95 aa)) constitute a PPIase FKBP-type domain.

It belongs to the FKBP-type PPIase family.

The protein resides in the plastid. It localises to the chloroplast thylakoid lumen. It catalyses the reaction [protein]-peptidylproline (omega=180) = [protein]-peptidylproline (omega=0). Functionally, PPIases accelerate the folding of proteins. It catalyzes the cis-trans isomerization of proline imidic peptide bonds in oligopeptides. In Arabidopsis thaliana (Mouse-ear cress), this protein is Peptidyl-prolyl cis-trans isomerase FKBP16-4, chloroplastic (FKBP16-4).